The chain runs to 124 residues: Small ribosomal subunit protein uS13 (124 aa).

Positions 99-124 (RGQRTRTNARTRKGPRKTVGVMRKKS) are disordered. Residues 101–124 (QRTRTNARTRKGPRKTVGVMRKKS) show a composition bias toward basic residues.

It belongs to the universal ribosomal protein uS13 family. Part of the 30S ribosomal subunit. Forms a loose heterodimer with protein S19. Forms two bridges to the 50S subunit in the 70S ribosome.

Functionally, located at the top of the head of the 30S subunit, it contacts several helices of the 16S rRNA. In the 70S ribosome it contacts the 23S rRNA (bridge B1a) and protein L5 of the 50S subunit (bridge B1b), connecting the 2 subunits; these bridges are implicated in subunit movement. Contacts the tRNAs in the A and P-sites. In Caldicellulosiruptor saccharolyticus (strain ATCC 43494 / DSM 8903 / Tp8T 6331), this protein is Small ribosomal subunit protein uS13.